A 125-amino-acid chain; its full sequence is MORF4 family-associated protein 1 (125 aa).

The tract at residues 76–99 (ESALNHLQGAGGAEPRGPRAEKAD) is disordered. Residues 94-124 (RAEKADEKAQEMAKMAEMLVQLVRRIEKSES) adopt a coiled-coil conformation.

Belongs to the MORF4 family-associated protein family. Found in a complex composed of MORF4L1, MRFAP1 and RB1. Interacts via its N-terminus with MORF4L1. Interacts with CSTB and MORF4L2. In terms of tissue distribution, widely expressed in all tissues examined and as early as 7 days during embryonic development.

It is found in the nucleus. The protein resides in the cytoplasm. The protein localises to the perinuclear region. The sequence is that of MORF4 family-associated protein 1 from Mus musculus (Mouse).